A 240-amino-acid polypeptide reads, in one-letter code: tRNA (guanine-N(7)-)-methyltransferase (240 aa).

Glutamate 70, glutamate 95, aspartate 122, and aspartate 145 together coordinate S-adenosyl-L-methionine. The active site involves aspartate 145. Substrate contacts are provided by residues lysine 149, aspartate 181, and threonine 218–glutamate 221.

This sequence belongs to the class I-like SAM-binding methyltransferase superfamily. TrmB family.

It catalyses the reaction guanosine(46) in tRNA + S-adenosyl-L-methionine = N(7)-methylguanosine(46) in tRNA + S-adenosyl-L-homocysteine. The protein operates within tRNA modification; N(7)-methylguanine-tRNA biosynthesis. In terms of biological role, catalyzes the formation of N(7)-methylguanine at position 46 (m7G46) in tRNA. This chain is tRNA (guanine-N(7)-)-methyltransferase, found in Pseudomonas entomophila (strain L48).